Reading from the N-terminus, the 83-residue chain is uncharacterized protein (83 aa).

Residues Ala-24 to Leu-44 form a helical membrane-spanning segment.

The protein localises to the host membrane. This is an uncharacterized protein from Acidianus sp. F28 (AFV-2).